The sequence spans 288 residues: Bifunctional protein FolD (288 aa).

G166–S168 contacts NADP(+).

The protein belongs to the tetrahydrofolate dehydrogenase/cyclohydrolase family. Homodimer.

The enzyme catalyses (6R)-5,10-methylene-5,6,7,8-tetrahydrofolate + NADP(+) = (6R)-5,10-methenyltetrahydrofolate + NADPH. It carries out the reaction (6R)-5,10-methenyltetrahydrofolate + H2O = (6R)-10-formyltetrahydrofolate + H(+). The protein operates within one-carbon metabolism; tetrahydrofolate interconversion. In terms of biological role, catalyzes the oxidation of 5,10-methylenetetrahydrofolate to 5,10-methenyltetrahydrofolate and then the hydrolysis of 5,10-methenyltetrahydrofolate to 10-formyltetrahydrofolate. This Levilactobacillus brevis (strain ATCC 367 / BCRC 12310 / CIP 105137 / JCM 1170 / LMG 11437 / NCIMB 947 / NCTC 947) (Lactobacillus brevis) protein is Bifunctional protein FolD.